A 99-amino-acid chain; its full sequence is MSGADRPDRIARRIHVKGKVQGVWFRAWTVEQAAELGLDGWVRNRADGSVEAVAAGPADRVEEMIARCRRGSPASRVDSIDVEDTPGVVAQGFTQKPTV.

One can recognise an Acylphosphatase-like domain in the interval 11 to 97; sequence ARRIHVKGKV…VVAQGFTQKP (87 aa). Catalysis depends on residues Arg-26 and Asn-44.

This sequence belongs to the acylphosphatase family.

The catalysed reaction is an acyl phosphate + H2O = a carboxylate + phosphate + H(+). The sequence is that of Acylphosphatase (acyP) from Rhizorhabdus wittichii (strain DSM 6014 / CCUG 31198 / JCM 15750 / NBRC 105917 / EY 4224 / RW1) (Sphingomonas wittichii).